The primary structure comprises 469 residues: 3-isopropylmalate dehydratase large subunit (469 aa).

Residues C347, C408, and C411 each contribute to the [4Fe-4S] cluster site.

It belongs to the aconitase/IPM isomerase family. LeuC type 1 subfamily. As to quaternary structure, heterodimer of LeuC and LeuD. [4Fe-4S] cluster serves as cofactor.

It catalyses the reaction (2R,3S)-3-isopropylmalate = (2S)-2-isopropylmalate. It functions in the pathway amino-acid biosynthesis; L-leucine biosynthesis; L-leucine from 3-methyl-2-oxobutanoate: step 2/4. Catalyzes the isomerization between 2-isopropylmalate and 3-isopropylmalate, via the formation of 2-isopropylmaleate. In Haemophilus influenzae (strain 86-028NP), this protein is 3-isopropylmalate dehydratase large subunit.